Reading from the N-terminus, the 217-residue chain is 3,4-dihydroxy-2-butanone 4-phosphate synthase (217 aa).

D-ribulose 5-phosphate contacts are provided by residues 37-38 (RE), aspartate 42, 150-154 (RRGHT), and glutamate 174. Glutamate 38 serves as a coordination point for Mg(2+). Residue histidine 153 coordinates Mg(2+).

Belongs to the DHBP synthase family. Homodimer. Requires Mg(2+) as cofactor. It depends on Mn(2+) as a cofactor.

It catalyses the reaction D-ribulose 5-phosphate = (2S)-2-hydroxy-3-oxobutyl phosphate + formate + H(+). Its pathway is cofactor biosynthesis; riboflavin biosynthesis; 2-hydroxy-3-oxobutyl phosphate from D-ribulose 5-phosphate: step 1/1. Its function is as follows. Catalyzes the conversion of D-ribulose 5-phosphate to formate and 3,4-dihydroxy-2-butanone 4-phosphate. In Shewanella baltica (strain OS223), this protein is 3,4-dihydroxy-2-butanone 4-phosphate synthase.